The sequence spans 380 residues: Shedu protein SduA (380 aa).

Its function is as follows. Only component of antiviral defense system Shedu. Expression of Shedu in B.subtilis (strain BEST7003) confers resistance to phages phi105, phi29, rho14 and to a lesser extent to SPP1. May be an endonuclease. This is Shedu protein SduA from Bacillus cereus (strain B4264).